The sequence spans 895 residues: Putative endoplasmic reticulum metallopeptidase 1-A (895 aa).

A disordered region spans residues 1–30; sequence MLRRRGGPNELRDELNNSKNQPEDDQRTKR. Topologically, residues 1–34 are cytoplasmic; the sequence is MLRRRGGPNELRDELNNSKNQPEDDQRTKRGRES. Over residues 10-30 the composition is skewed to basic and acidic residues; that stretch reads ELRDELNNSKNQPEDDQRTKR. The helical transmembrane segment at 35–55 threads the bilayer; sequence IGFRHWIYFVLTVAIVYAGVV. Over 56-383 the chain is Lumenal; sequence ALHRKMPAVR…VVGLFTVYYS (328 aa). Positions 174 and 186 each coordinate Zn(2+). The active-site Proton acceptor is the Glu220. The Zn(2+) site is built by Glu221, Glu247, and His323. A helical membrane pass occupies residues 384 to 404; the sequence is VNVGKLLNYIACFATYFLVVL. Residues 405-423 are Cytoplasmic-facing; that stretch reads RIRNRLYSVGDLAIAFKHH. Residues 424–444 form a helical membrane-spanning segment; sequence VVAFLAMVITMLLIIAFVVQM. Topologically, residues 445–452 are lumenal; that stretch reads DLVMCWYK. The chain crosses the membrane as a helical span at residues 453–473; it reads MPEIVGALYVLPMLIAGAIVH. At 474-492 the chain is on the cytoplasmic side; sequence SHYADNNRIRNVEMVQYDT. Residues 493 to 513 traverse the membrane as a helical segment; it reads ILLSFASILFLMTFYNLSSAF. Residues 514–517 are Lumenal-facing; it reads YVLN. The helical transmembrane segment at 518–538 threads the bilayer; the sequence is NLILPVFKDIIIWALGLFGVI. At 539–544 the chain is on the cytoplasmic side; the sequence is RRVTPR. Residues 545–565 traverse the membrane as a helical segment; that stretch reads VLFFTQLFCFLPTFVFAAYAI. Topologically, residues 566–586 are lumenal; the sequence is SQCVDFFVPVMGRLGNAINPE. Residues 587–607 traverse the membrane as a helical segment; it reads FIMGPLGLVIASGFILFVNNL. Over 608 to 613 the chain is Cytoplasmic; the sequence is FYISRR. A helical transmembrane segment spans residues 614–634; that stretch reads MNYIIRLLFAIFALFILVLIT. Over 635–895 the chain is Lumenal; sequence TKVGNPYEYS…GRSEIVVKIF (261 aa). N-linked (GlcNAc...) asparagine glycosylation is found at Asn659, Asn702, and Asn758.

It belongs to the peptidase M28 family. It depends on Zn(2+) as a cofactor.

It is found in the endoplasmic reticulum membrane. This Caenorhabditis elegans protein is Putative endoplasmic reticulum metallopeptidase 1-A.